A 345-amino-acid polypeptide reads, in one-letter code: Phosphoribosylformylglycinamidine cyclo-ligase (345 aa).

Belongs to the AIR synthase family.

The protein localises to the cytoplasm. It carries out the reaction 2-formamido-N(1)-(5-O-phospho-beta-D-ribosyl)acetamidine + ATP = 5-amino-1-(5-phospho-beta-D-ribosyl)imidazole + ADP + phosphate + H(+). It functions in the pathway purine metabolism; IMP biosynthesis via de novo pathway; 5-amino-1-(5-phospho-D-ribosyl)imidazole from N(2)-formyl-N(1)-(5-phospho-D-ribosyl)glycinamide: step 2/2. The polypeptide is Phosphoribosylformylglycinamidine cyclo-ligase (Pseudoalteromonas atlantica (strain T6c / ATCC BAA-1087)).